The sequence spans 199 residues: Protein-methionine-sulfoxide reductase heme-binding subunit MsrQ (199 aa).

A run of 5 helical transmembrane segments spans residues 13–33, 79–99, 120–140, 147–167, and 169–189; these read VLLHLAGFLPLLWLILSVDQG, LLGLWCFFWATLHLVSYALLE, LGVISWLILLALAVTSPQIMM, WQKLHNFVYLVAILAPIHYLW, and VKTLSPQPILYALAALILLLF.

This sequence belongs to the MsrQ family. In terms of assembly, heterodimer of a catalytic subunit (MsrP) and a heme-binding subunit (MsrQ). It depends on FMN as a cofactor. The cofactor is heme b.

It localises to the cell inner membrane. Part of the MsrPQ system that repairs oxidized periplasmic proteins containing methionine sulfoxide residues (Met-O), using respiratory chain electrons. Thus protects these proteins from oxidative-stress damage caused by reactive species of oxygen and chlorine generated by the host defense mechanisms. MsrPQ is essential for the maintenance of envelope integrity under bleach stress, rescuing a wide series of structurally unrelated periplasmic proteins from methionine oxidation. MsrQ provides electrons for reduction to the reductase catalytic subunit MsrP, using the quinone pool of the respiratory chain. The sequence is that of Protein-methionine-sulfoxide reductase heme-binding subunit MsrQ from Pectobacterium carotovorum subsp. carotovorum (strain PC1).